A 332-amino-acid chain; its full sequence is MSQVVVCALYKFVSLPNFESIQKPLLAHMESAGIKGTLLLASEGINGTVAGSQLAIDNLLQWLAKQDGLDSIVHKLSFDETMPFYRTKVKLKKEIVTMGVEGIDPLKVVGTYVKPKDWNQLISDPEVLLVDTRNEYEVQIGTFKNAVDPKTDTFREFPAYVKEHLDPAKHKKVAMFCTGGIRCEKSTAYLKEQGFDEVYHLEGGVLKYLEEVKQEESLWEGECFVFDNRVAVNHALEKGQYDQCNACRMPITELEKASEAFVQGVSCPHCIDNISEKQRQRFEERERQMQLAAKRGEAHIGSDVGAVIQSRRDNKENLKKSQVKLNNKKYNK.

A Rhodanese domain is found at 123–217 (SDPEVLLVDT…YLEEVKQEES (95 aa)). C177 functions as the Cysteine persulfide intermediate in the catalytic mechanism. The segment at 302 to 332 (SDVGAVIQSRRDNKENLKKSQVKLNNKKYNK) is disordered. Positions 310-319 (SRRDNKENLK) are enriched in basic and acidic residues.

The protein belongs to the TrhO family.

It carries out the reaction uridine(34) in tRNA + AH2 + O2 = 5-hydroxyuridine(34) in tRNA + A + H2O. Catalyzes oxygen-dependent 5-hydroxyuridine (ho5U) modification at position 34 in tRNAs. The polypeptide is tRNA uridine(34) hydroxylase (Shewanella woodyi (strain ATCC 51908 / MS32)).